A 136-amino-acid polypeptide reads, in one-letter code: Small ribosomal subunit protein uS9 (136 aa).

This sequence belongs to the universal ribosomal protein uS9 family.

In Borrelia turicatae (strain 91E135), this protein is Small ribosomal subunit protein uS9.